The chain runs to 535 residues: Succinate-semialdehyde dehydrogenase, mitochondrial (535 aa).

Residues 1–47 (MATCIWLRSCGARRLGWTFPGCRLRPRAGGLVPASGPAPGPAQLRCY) constitute a mitochondrion transit peptide. An N6-acetyllysine; alternate modification is found at lysine 126. Lysine 126 carries the post-translational modification N6-succinyllysine; alternate. Residues lysine 135 and lysine 184 each carry the N6-succinyllysine modification. NAD(+) is bound by residues arginine 213 and 228–231 (KPAE). Residue arginine 213 coordinates substrate. N6-acetyllysine; alternate is present on lysine 265. Lysine 265 carries the N6-succinyllysine; alternate modification. 284–289 (GSTTTG) contacts NAD(+). Glutamate 306 functions as the Proton acceptor in the catalytic mechanism. A substrate-binding site is contributed by arginine 334. Catalysis depends on cysteine 340, which acts as the Nucleophile. Cysteine 340 and cysteine 342 are disulfide-bonded. Residue lysine 365 is modified to N6-acetyllysine. At lysine 402 the chain carries N6-succinyllysine. Lysine 411 carries the post-translational modification N6-acetyllysine. Serine 498 contacts substrate. Serine 499 bears the Phosphoserine mark.

It belongs to the aldehyde dehydrogenase family. In terms of assembly, homotetramer.

It is found in the mitochondrion. The enzyme catalyses succinate semialdehyde + NAD(+) + H2O = succinate + NADH + 2 H(+). It functions in the pathway amino-acid degradation; 4-aminobutanoate degradation. With respect to regulation, redox-regulated. Inhibited under oxydizing conditions. Functionally, catalyzes one step in the degradation of the inhibitory neurotransmitter gamma-aminobutyric acid (GABA). This Pan paniscus (Pygmy chimpanzee) protein is Succinate-semialdehyde dehydrogenase, mitochondrial (ALDH5A1).